The sequence spans 310 residues: ADP-L-glycero-D-manno-heptose-6-epimerase (310 aa).

NADP(+)-binding positions include 10 to 11, 31 to 32, Lys-38, Lys-53, 75 to 79, and Asn-92; these read LI, DN, and EGACS. Tyr-140 (proton acceptor) is an active-site residue. Lys-144 is an NADP(+) binding site. Asn-169 contacts substrate. Positions 170 and 178 each coordinate NADP(+). Lys-178 serves as the catalytic Proton acceptor. Substrate contacts are provided by residues Ser-180, His-187, 201 to 204, Arg-209, and Tyr-272; that span reads FAGS.

Belongs to the NAD(P)-dependent epimerase/dehydratase family. HldD subfamily. As to quaternary structure, homopentamer. NADP(+) is required as a cofactor.

The enzyme catalyses ADP-D-glycero-beta-D-manno-heptose = ADP-L-glycero-beta-D-manno-heptose. It functions in the pathway nucleotide-sugar biosynthesis; ADP-L-glycero-beta-D-manno-heptose biosynthesis; ADP-L-glycero-beta-D-manno-heptose from D-glycero-beta-D-manno-heptose 7-phosphate: step 4/4. Catalyzes the interconversion between ADP-D-glycero-beta-D-manno-heptose and ADP-L-glycero-beta-D-manno-heptose via an epimerization at carbon 6 of the heptose. The chain is ADP-L-glycero-D-manno-heptose-6-epimerase from Erwinia tasmaniensis (strain DSM 17950 / CFBP 7177 / CIP 109463 / NCPPB 4357 / Et1/99).